We begin with the raw amino-acid sequence, 425 residues long: UBX domain-containing protein 4 (425 aa).

The disordered stretch occupies residues 224 to 257 (TPIPSLPSTPSSYQNLPSQSLTGESLPTVSNQEK). The span at 236–254 (YQNLPSQSLTGESLPTVSN) shows a compositional bias: polar residues. Serine 338 bears the Phosphoserine mark. Residues 341–390 (PLPSSAIVKFDFGNGKSIVHEFSKDDNIETLRAFVASHLSPEESTSFQLT) enclose the UBX domain.

The protein localises to the cytoplasm. It is found in the nucleus. Functionally, involved in CDC48-dependent protein degradation through the ubiquitin/proteasome pathway. This is UBX domain-containing protein 4 (ubx4) from Schizosaccharomyces pombe (strain 972 / ATCC 24843) (Fission yeast).